The chain runs to 20 residues: Brevinin-1DYc (20 aa).

A disulfide bridge links Cys14 with Cys20.

In terms of tissue distribution, expressed by the skin glands.

The protein localises to the secreted. Antimicrobial peptide. Has low activity against the Gram-positive bacterium S.aureus and the Gram-negative bacterium E.coli (MIC&lt;15 uM). Has a strong hemolytic activity. The protein is Brevinin-1DYc of Rana dybowskii (Dybovsky's frog).